Consider the following 118-residue polypeptide: Small ribosomal subunit protein uS13 (118 aa).

The segment at 94–118 (GLPVRGQRTKTNARTRKGPRKPIKK) is disordered.

It belongs to the universal ribosomal protein uS13 family. As to quaternary structure, part of the 30S ribosomal subunit. Forms a loose heterodimer with protein S19. Forms two bridges to the 50S subunit in the 70S ribosome.

Located at the top of the head of the 30S subunit, it contacts several helices of the 16S rRNA. In the 70S ribosome it contacts the 23S rRNA (bridge B1a) and protein L5 of the 50S subunit (bridge B1b), connecting the 2 subunits; these bridges are implicated in subunit movement. Contacts the tRNAs in the A and P-sites. This is Small ribosomal subunit protein uS13 from Shigella dysenteriae serotype 1 (strain Sd197).